A 426-amino-acid polypeptide reads, in one-letter code: Methionine aminopeptidase 2 (426 aa).

The interval 1-72 (MTSATTTEAT…QEQTNPPTVG (72 aa)) is disordered. Basic and acidic residues predominate over residues 10-34 (TAKDLQEKLSLKENDVVEDDGKVEE). Residues 47–60 (KKKKKKKKSSKKKK) show a composition bias toward basic residues. His179 provides a ligand contact to substrate. Residues Asp199, Asp210, and His279 each coordinate a divalent metal cation. His287 contributes to the substrate binding site. Positions 312 and 407 each coordinate a divalent metal cation.

The protein belongs to the peptidase M24A family. Methionine aminopeptidase eukaryotic type 2 subfamily. Co(2+) is required as a cofactor. It depends on Zn(2+) as a cofactor. The cofactor is Mn(2+). Requires Fe(2+) as cofactor.

Its subcellular location is the cytoplasm. The catalysed reaction is Release of N-terminal amino acids, preferentially methionine, from peptides and arylamides.. Its function is as follows. Cotranslationally removes the N-terminal methionine from nascent proteins. The N-terminal methionine is often cleaved when the second residue in the primary sequence is small and uncharged (Met-Ala-, Cys, Gly, Pro, Ser, Thr, or Val). This is Methionine aminopeptidase 2 (fma2) from Schizosaccharomyces pombe (strain 972 / ATCC 24843) (Fission yeast).